Consider the following 255-residue polypeptide: Hydroxyacylglutathione hydrolase (255 aa).

Zn(2+) contacts are provided by His56, His58, Asp60, His61, His114, Asp133, and His171.

Belongs to the metallo-beta-lactamase superfamily. Glyoxalase II family. In terms of assembly, monomer. Zn(2+) is required as a cofactor.

The catalysed reaction is an S-(2-hydroxyacyl)glutathione + H2O = a 2-hydroxy carboxylate + glutathione + H(+). The protein operates within secondary metabolite metabolism; methylglyoxal degradation; (R)-lactate from methylglyoxal: step 2/2. Thiolesterase that catalyzes the hydrolysis of S-D-lactoyl-glutathione to form glutathione and D-lactic acid. This chain is Hydroxyacylglutathione hydrolase, found in Rhodopseudomonas palustris (strain ATCC BAA-98 / CGA009).